Here is a 91-residue protein sequence, read N- to C-terminus: Large ribosomal subunit protein uL22 (91 aa).

This sequence belongs to the universal ribosomal protein uL22 family. Part of the 50S ribosomal subunit.

In terms of biological role, this protein binds specifically to 23S rRNA; its binding is stimulated by other ribosomal proteins, e.g. L4, L17, and L20. It is important during the early stages of 50S assembly. It makes multiple contacts with different domains of the 23S rRNA in the assembled 50S subunit and ribosome. Its function is as follows. The globular domain of the protein is located near the polypeptide exit tunnel on the outside of the subunit, while an extended beta-hairpin is found that lines the wall of the exit tunnel in the center of the 70S ribosome. This Clover yellow edge phytoplasma protein is Large ribosomal subunit protein uL22 (rplV).